A 609-amino-acid polypeptide reads, in one-letter code: UvrABC system protein C (609 aa).

The 79-residue stretch at 16-94 (SSPGVYRMYD…IKQYMPKYNV (79 aa)) folds into the GIY-YIG domain. The region spanning 203-238 (HQVMSVLVGKMEQAASDMRYEQAALYRDQITALRRV) is the UVR domain.

This sequence belongs to the UvrC family. As to quaternary structure, interacts with UvrB in an incision complex.

The protein resides in the cytoplasm. In terms of biological role, the UvrABC repair system catalyzes the recognition and processing of DNA lesions. UvrC both incises the 5' and 3' sides of the lesion. The N-terminal half is responsible for the 3' incision and the C-terminal half is responsible for the 5' incision. This is UvrABC system protein C from Shewanella halifaxensis (strain HAW-EB4).